A 218-amino-acid chain; its full sequence is PKHD-type hydroxylase Sala_1910 (218 aa).

The Fe2OG dioxygenase domain occupies 74-172 (RIAPPLLTRY…RLVAITFIQS (99 aa)). Fe cation contacts are provided by histidine 92, aspartate 94, and histidine 153. Arginine 163 contributes to the 2-oxoglutarate binding site.

The cofactor is Fe(2+). Requires L-ascorbate as cofactor.

The polypeptide is PKHD-type hydroxylase Sala_1910 (Sphingopyxis alaskensis (strain DSM 13593 / LMG 18877 / RB2256) (Sphingomonas alaskensis)).